The sequence spans 616 residues: Chaperone protein HscA (616 aa).

The protein belongs to the heat shock protein 70 family.

Functionally, chaperone involved in the maturation of iron-sulfur cluster-containing proteins. Has a low intrinsic ATPase activity which is markedly stimulated by HscB. Involved in the maturation of IscU. The chain is Chaperone protein HscA from Pectobacterium carotovorum subsp. carotovorum (strain PC1).